The chain runs to 236 residues: Large ribosomal subunit protein uL2 (236 aa).

Residues 198 to 236 form a disordered region; sequence DHPFGGGGRQHPGRPKTVSRGTPPGRKVGSIAARRTGKR.

This sequence belongs to the universal ribosomal protein uL2 family. As to quaternary structure, part of the 50S ribosomal subunit. Forms a bridge to the 30S subunit in the 70S ribosome.

In terms of biological role, one of the primary rRNA binding proteins. Required for association of the 30S and 50S subunits to form the 70S ribosome, for tRNA binding and peptide bond formation. It has been suggested to have peptidyltransferase activity; this is somewhat controversial. Makes several contacts with the 16S rRNA in the 70S ribosome. The chain is Large ribosomal subunit protein uL2 from Methanothrix thermoacetophila (strain DSM 6194 / JCM 14653 / NBRC 101360 / PT) (Methanosaeta thermophila).